The sequence spans 363 residues: tRNA-specific 2-thiouridylase MnmA (363 aa).

ATP-binding positions include 6-13 and Leu-32; that span reads AMSGGVDS. Cys-101 serves as the catalytic Nucleophile. A disulfide bond links Cys-101 and Cys-193. Gly-125 is an ATP binding site. The interval 143–145 is interaction with tRNA; the sequence is KDQ. Cys-193 acts as the Cysteine persulfide intermediate in catalysis.

The protein belongs to the MnmA/TRMU family.

Its subcellular location is the cytoplasm. It catalyses the reaction S-sulfanyl-L-cysteinyl-[protein] + uridine(34) in tRNA + AH2 + ATP = 2-thiouridine(34) in tRNA + L-cysteinyl-[protein] + A + AMP + diphosphate + H(+). Its function is as follows. Catalyzes the 2-thiolation of uridine at the wobble position (U34) of tRNA, leading to the formation of s(2)U34. This is tRNA-specific 2-thiouridylase MnmA from Mycobacterium marinum (strain ATCC BAA-535 / M).